A 351-amino-acid polypeptide reads, in one-letter code: Photosystem II D2 protein (351 aa).

The helical transmembrane segment at Thr39–Thr59 threads the bilayer. His116 lines the chlorophyll a pocket. The chain crosses the membrane as a helical span at residues Gly123 to Pro139. Residues Gln128 and Asn141 each contribute to the pheophytin a site. A helical membrane pass occupies residues Val151–Ser164. Position 196 (His196) interacts with chlorophyll a. A helical transmembrane segment spans residues Gly206–Glu226. A plastoquinone is bound by residues His213 and Phe260. His213 provides a ligand contact to Fe cation. His267 lines the Fe cation pocket. A helical transmembrane segment spans residues Gly277–Arg293.

Belongs to the reaction center PufL/M/PsbA/D family. In terms of assembly, PSII is composed of 1 copy each of membrane proteins PsbA, PsbB, PsbC, PsbD, PsbE, PsbF, PsbH, PsbI, PsbJ, PsbK, PsbL, PsbM, PsbT, PsbX, PsbY, PsbZ, Psb30/Ycf12, peripheral proteins PsbO, CyanoQ (PsbQ), PsbU, PsbV and a large number of cofactors. It forms dimeric complexes. Requires The D1/D2 heterodimer binds P680, chlorophylls that are the primary electron donor of PSII, and subsequent electron acceptors. It shares a non-heme iron and each subunit binds pheophytin, quinone, additional chlorophylls, carotenoids and lipids. There is also a Cl(-1) ion associated with D1 and D2, which is required for oxygen evolution. The PSII complex binds additional chlorophylls, carotenoids and specific lipids. as cofactor.

The protein resides in the cellular thylakoid membrane. It carries out the reaction 2 a plastoquinone + 4 hnu + 2 H2O = 2 a plastoquinol + O2. In terms of biological role, photosystem II (PSII) is a light-driven water:plastoquinone oxidoreductase that uses light energy to abstract electrons from H(2)O, generating O(2) and a proton gradient subsequently used for ATP formation. It consists of a core antenna complex that captures photons, and an electron transfer chain that converts photonic excitation into a charge separation. The D1/D2 (PsbA/PsbD) reaction center heterodimer binds P680, the primary electron donor of PSII as well as several subsequent electron acceptors. D2 is needed for assembly of a stable PSII complex. The protein is Photosystem II D2 protein of Parasynechococcus marenigrum (strain WH8102).